Consider the following 421-residue polypeptide: D-amino acid dehydrogenase (421 aa).

3 to 17 (VIVLGSGVIGVASAY) lines the FAD pocket.

Belongs to the DadA oxidoreductase family. FAD serves as cofactor.

It carries out the reaction a D-alpha-amino acid + A + H2O = a 2-oxocarboxylate + AH2 + NH4(+). It participates in amino-acid degradation; D-alanine degradation; NH(3) and pyruvate from D-alanine: step 1/1. Functionally, oxidative deamination of D-amino acids. The polypeptide is D-amino acid dehydrogenase (Acinetobacter baumannii (strain ATCC 17978 / DSM 105126 / CIP 53.77 / LMG 1025 / NCDC KC755 / 5377)).